We begin with the raw amino-acid sequence, 200 residues long: Shikimate kinase (200 aa).

33–38 (GAGKST) is an ATP binding site. Ser-37 lines the Mg(2+) pocket. 3 residues coordinate substrate: Asp-55, Arg-79, and Gly-101. Arg-139 provides a ligand contact to ATP. Arg-158 is a substrate binding site.

It belongs to the shikimate kinase family. Monomer. Requires Mg(2+) as cofactor.

Its subcellular location is the cytoplasm. The catalysed reaction is shikimate + ATP = 3-phosphoshikimate + ADP + H(+). The protein operates within metabolic intermediate biosynthesis; chorismate biosynthesis; chorismate from D-erythrose 4-phosphate and phosphoenolpyruvate: step 5/7. Functionally, catalyzes the specific phosphorylation of the 3-hydroxyl group of shikimic acid using ATP as a cosubstrate. The polypeptide is Shikimate kinase (Brucella abortus (strain S19)).